We begin with the raw amino-acid sequence, 1388 residues long: Peroxisomal ATPase PEX6 (1388 aa).

5 disordered regions span residues 1–29 (MTTS…PALS), 169–192 (EGTF…DTPE), 262–287 (RGQS…DDTA), 302–323 (DAAT…SGVD), and 346–365 (TTAS…IGRG). Residues 14-23 (RSPRTRRRRQ) are compositionally biased toward basic residues. Positions 169-178 (EGTFFRDRPN) are enriched in basic and acidic residues. Residues 310–323 (TVTETEESDLSGVD) are compositionally biased toward acidic residues. Residues 346–358 (TTASGVSTMQPGT) are compositionally biased toward polar residues. 1034–1041 (GPPGTGKT) lines the ATP pocket. The disordered stretch occupies residues 1297–1388 (GPPEKDRQQQ…GTASDDEGLY (92 aa)). The span at 1319 to 1332 (VSGSSVVSKGKGKA) shows a compositional bias: low complexity.

Belongs to the AAA ATPase family. As to quaternary structure, interacts with PEX1; forming the PEX1-PEX6 AAA ATPase complex, which is composed of a heterohexamer formed by a trimer of PEX1-PEX6 dimers.

It localises to the cytoplasm. Its subcellular location is the cytosol. It is found in the peroxisome membrane. The enzyme catalyses ATP + H2O = ADP + phosphate + H(+). Functionally, component of the PEX1-PEX6 AAA ATPase complex, a protein dislocase complex that mediates the ATP-dependent extraction of the PEX5 receptor from peroxisomal membranes, an essential step for PEX5 recycling. Specifically recognizes PEX5 monoubiquitinated at 'Cys-6', and pulls it out of the peroxisome lumen through the PEX2-PEX10-PEX12 retrotranslocation channel. Extraction by the PEX1-PEX6 AAA ATPase complex is accompanied by unfolding of the TPR repeats and release of bound cargo from PEX5. The polypeptide is Peroxisomal ATPase PEX6 (PEX6) (Colletotrichum orbiculare (strain 104-T / ATCC 96160 / CBS 514.97 / LARS 414 / MAFF 240422) (Cucumber anthracnose fungus)).